Consider the following 864-residue polypeptide: Structure-specific endonuclease subunit SLX4 (864 aa).

Disordered regions lie at residues 1–21 (MTTQ…PVIP), 49–69 (LSTS…KTQG), 91–113 (TGTG…PGNA), 161–190 (ANQT…GNDH), 289–318 (LSDD…NRPK), 346–385 (TLLS…NEPP), 413–433 (ANGH…ISNS), and 625–767 (KAPN…VTSS). The span at 295–306 (SSITEDSESATS) shows a compositional bias: polar residues. The span at 307–318 (KPRRVKAKNRPK) shows a compositional bias: basic residues. The span at 656–668 (QPNSISQKATTQV) shows a compositional bias: polar residues. Over residues 685–695 (VSSRRSTSTSK) the composition is skewed to low complexity. Positions 743-767 (PESFNLPTTPLTIRSGKVPSTVTSS) are enriched in polar residues.

It belongs to the SLX4 family. Forms a heterodimer with SLX1. Post-translationally, phosphorylated in response to DNA damage.

It localises to the nucleus. Functionally, regulatory subunit of the SLX1-SLX4 structure-specific endonuclease that resolves DNA secondary structures generated during DNA repair and recombination. Has endonuclease activity towards branched DNA substrates, introducing single-strand cuts in duplex DNA close to junctions with ss-DNA. The protein is Structure-specific endonuclease subunit SLX4 of Paracoccidioides lutzii (strain ATCC MYA-826 / Pb01) (Paracoccidioides brasiliensis).